Here is a 418-residue protein sequence, read N- to C-terminus: Peptide chain release factor subunit 1 (418 aa).

The protein belongs to the eukaryotic release factor 1 family. In terms of assembly, heterodimer of two subunits, one of which binds GTP.

Its subcellular location is the cytoplasm. Its function is as follows. Directs the termination of nascent peptide synthesis (translation) in response to the termination codons UAA, UAG and UGA. The protein is Peptide chain release factor subunit 1 of Haloarcula marismortui (strain ATCC 43049 / DSM 3752 / JCM 8966 / VKM B-1809) (Halobacterium marismortui).